Reading from the N-terminus, the 225-residue chain is NAD(P)H-quinone oxidoreductase subunit K, chloroplastic (225 aa).

Positions 43, 44, 108, and 139 each coordinate [4Fe-4S] cluster.

It belongs to the complex I 20 kDa subunit family. As to quaternary structure, NDH is composed of at least 16 different subunits, 5 of which are encoded in the nucleus. It depends on [4Fe-4S] cluster as a cofactor.

Its subcellular location is the plastid. The protein resides in the chloroplast thylakoid membrane. It carries out the reaction a plastoquinone + NADH + (n+1) H(+)(in) = a plastoquinol + NAD(+) + n H(+)(out). The catalysed reaction is a plastoquinone + NADPH + (n+1) H(+)(in) = a plastoquinol + NADP(+) + n H(+)(out). In terms of biological role, NDH shuttles electrons from NAD(P)H:plastoquinone, via FMN and iron-sulfur (Fe-S) centers, to quinones in the photosynthetic chain and possibly in a chloroplast respiratory chain. The immediate electron acceptor for the enzyme in this species is believed to be plastoquinone. Couples the redox reaction to proton translocation, and thus conserves the redox energy in a proton gradient. In Draba nemorosa (Woodland whitlowgrass), this protein is NAD(P)H-quinone oxidoreductase subunit K, chloroplastic.